The sequence spans 166 residues: Phosphopantetheine adenylyltransferase (166 aa).

Thr9 contacts substrate. Residues 9 to 10 (TF) and His17 each bind ATP. 3 residues coordinate substrate: Lys41, Leu73, and Arg87. ATP contacts are provided by residues 88–90 (GLR), Glu98, and 123–129 (YQFISGT).

The protein belongs to the bacterial CoaD family. As to quaternary structure, homohexamer. Requires Mg(2+) as cofactor.

The protein localises to the cytoplasm. The catalysed reaction is (R)-4'-phosphopantetheine + ATP + H(+) = 3'-dephospho-CoA + diphosphate. It functions in the pathway cofactor biosynthesis; coenzyme A biosynthesis; CoA from (R)-pantothenate: step 4/5. In terms of biological role, reversibly transfers an adenylyl group from ATP to 4'-phosphopantetheine, yielding dephospho-CoA (dPCoA) and pyrophosphate. This Burkholderia mallei (strain NCTC 10229) protein is Phosphopantetheine adenylyltransferase.